A 512-amino-acid chain; its full sequence is Probable malate:quinone oxidoreductase (512 aa).

The protein belongs to the MQO family. FAD is required as a cofactor.

The catalysed reaction is (S)-malate + a quinone = a quinol + oxaloacetate. It participates in carbohydrate metabolism; tricarboxylic acid cycle; oxaloacetate from (S)-malate (quinone route): step 1/1. The chain is Probable malate:quinone oxidoreductase from Bradyrhizobium diazoefficiens (strain JCM 10833 / BCRC 13528 / IAM 13628 / NBRC 14792 / USDA 110).